A 250-amino-acid polypeptide reads, in one-letter code: CCN family member 5 (250 aa).

The signal sequence occupies residues 1–23; that stretch reads MRGSPLIRLLATSFLCLLSMVCA. Cystine bridges form between cysteine 22–cysteine 50, cysteine 26–cysteine 52, cysteine 32–cysteine 53, cysteine 39–cysteine 56, cysteine 64–cysteine 78, and cysteine 70–cysteine 100. The region spanning 24–103 is the IGFBP N-terminal domain; sequence QLCRTPCTCP…DEDDGDCEVN (80 aa). One can recognise a VWFC domain in the interval 98–164; that stretch reads GDCEVNGRRY…GKCCPEWVCD (67 aa). One can recognise a TSP type-1 domain in the interval 194-238; that stretch reads WPNWSTAWGPCSTTCGLGIATRVSNQNRFCQLEIQRRLCLPRPCL. Asparagine 196 carries N-linked (GlcNAc...) asparagine glycosylation.

Belongs to the CCN family.

It is found in the secreted. Functionally, may play an important role in modulating bone turnover. Promotes the adhesion of osteoblast cells and inhibits the binding of fibrinogen to integrin receptors. In addition, inhibits osteocalcin production. This Rattus norvegicus (Rat) protein is CCN family member 5 (Ccn5).